Reading from the N-terminus, the 96-residue chain is UPF0235 protein KPK_0722 (96 aa).

This sequence belongs to the UPF0235 family.

This chain is UPF0235 protein KPK_0722, found in Klebsiella pneumoniae (strain 342).